The chain runs to 306 residues: Mitochondrial uncoupling protein 1 (306 aa).

3 Solcar repeats span residues 9-102, 112-203, and 212-296; these read LSLP…VKNL, VPLS…VKET, and DNVV…AKKY. 6 helical membrane passes run 15 to 35, 71 to 91, 118 to 138, 177 to 197, 218 to 238, and 269 to 289; these read FACSAFAACVGEVCTIPLDTA, LRSLWKGVVPGLHRQCLFGGL, ILAGLTTGALGIMVANPTDLV, TGLGPNVARNAIINAAELASY, ILSGLGAGFFAVCIGSPVDVV, and YKGFIPNFGRLGSWNVIMFLT.

It belongs to the mitochondrial carrier (TC 2.A.29) family. Widely expressed.

It is found in the mitochondrion inner membrane. Functionally, PUMPS are mitochondrial transporter proteins that create proton leaks across the inner mitochondrial membrane, thus uncoupling oxidative phosphorylation. This leads to a decrease in the efficiency of oxidative phosphorylation and an increase in heat production. Is involved in protecting plant cells against oxidative stress damage and maintaining the redox balance of the mitochondrial electron transport chain to facilitate photosynthetic metabolism. May play a regulatory role during photorespiration. The protein is Mitochondrial uncoupling protein 1 (PUMP1) of Arabidopsis thaliana (Mouse-ear cress).